A 351-amino-acid polypeptide reads, in one-letter code: SKP1-like protein 21 (351 aa).

Residues 108 to 167 (TSAADSLQLKPLVDLTSRALARIIEGKTPEEIREIFHLPDDLTEEEKLEPLKNTMDDPRI) form an interaction with the F-box domain of F-box proteins region. 2 disordered regions span residues 216-240 (VKTSKSKKKNKKRKEQKNGSSNGTC) and 330-351 (VNFSINGNGTSRRLTGPAAGHK). The span at 217-230 (KTSKSKKKNKKRKE) shows a compositional bias: basic residues. Positions 330-342 (VNFSINGNGTSRR) are enriched in polar residues.

It belongs to the SKP1 family. In terms of assembly, part of a SCF (SKP1-cullin-F-box) protein ligase complex. As to expression, expressed in young seedlings, roots, leaves, floral stems, inflorescences, and siliques.

It localises to the nucleus. It functions in the pathway protein modification; protein ubiquitination. In terms of biological role, involved in ubiquitination and subsequent proteasomal degradation of target proteins. Together with CUL1, RBX1 and a F-box protein, it forms a SCF E3 ubiquitin ligase complex. The functional specificity of this complex depends on the type of F-box protein. In the SCF complex, it serves as an adapter that links the F-box protein to CUL1. This chain is SKP1-like protein 21 (ASK21), found in Arabidopsis thaliana (Mouse-ear cress).